The primary structure comprises 254 residues: Glutamate racemase (254 aa).

Residues 7–8 (DS) and 39–40 (YG) each bind substrate. C70 acts as the Proton donor/acceptor in catalysis. Substrate is bound by residues 71 to 72 (NT) and E147. Catalysis depends on C178, which acts as the Proton donor/acceptor. 179-180 (TH) contacts substrate.

It belongs to the aspartate/glutamate racemases family. As to quaternary structure, homodimer.

The enzyme catalyses L-glutamate = D-glutamate. Its pathway is cell wall biogenesis; peptidoglycan biosynthesis. Functionally, provides the (R)-glutamate required for cell wall biosynthesis. Converts L- or D-glutamate to D- or L-glutamate, respectively, but not other amino acids such as alanine, aspartate, and glutamine. The protein is Glutamate racemase of Aquifex pyrophilus.